Consider the following 838-residue polypeptide: Probable beta-glucosidase I (838 aa).

Asn197 carries an N-linked (GlcNAc...) asparagine glycan. Residue Asp225 is part of the active site. The region spanning Asp395–Ala555 is the PA14 domain. The N-linked (GlcNAc...) asparagine glycan is linked to Asn493.

Belongs to the glycosyl hydrolase 3 family.

The protein localises to the secreted. It catalyses the reaction Hydrolysis of terminal, non-reducing beta-D-glucosyl residues with release of beta-D-glucose.. Its pathway is glycan metabolism; cellulose degradation. In terms of biological role, beta-glucosidases are one of a number of cellulolytic enzymes involved in the degradation of cellulosic biomass. Catalyzes the last step releasing glucose from the inhibitory cellobiose. The protein is Probable beta-glucosidase I (bglI) of Aspergillus fumigatus (strain ATCC MYA-4609 / CBS 101355 / FGSC A1100 / Af293) (Neosartorya fumigata).